A 336-amino-acid chain; its full sequence is Porphobilinogen deaminase (336 aa).

An S-(dipyrrolylmethanemethyl)cysteine modification is found at Cys-251. Residues Ser-327 and Ser-329 each carry the phosphoserine modification.

This sequence belongs to the HMBS family. The cofactor is dipyrromethane.

It catalyses the reaction 4 porphobilinogen + H2O = hydroxymethylbilane + 4 NH4(+). The protein operates within porphyrin-containing compound metabolism; protoporphyrin-IX biosynthesis; coproporphyrinogen-III from 5-aminolevulinate: step 2/4. Tetrapolymerization of the monopyrrole PBG into the hydroxymethylbilane pre-uroporphyrinogen in several discrete steps. The sequence is that of Porphobilinogen deaminase (hem3) from Schizosaccharomyces pombe (strain 972 / ATCC 24843) (Fission yeast).